The primary structure comprises 462 residues: Phospho-2-dehydro-3-deoxyheptonate aldolase AroG (462 aa).

Cys-87 is a Mn(2+) binding site. Phosphoenolpyruvate-binding positions include Arg-126, 283–284 (ER), Lys-306, and Arg-337. The Mn(2+) site is built by His-369, Glu-411, and Asp-441.

In terms of assembly, homodimer. Interacts with Rv0948c. The cofactor is Mn(2+). Co(2+) is required as a cofactor. Requires Cd(2+) as cofactor.

It carries out the reaction D-erythrose 4-phosphate + phosphoenolpyruvate + H2O = 7-phospho-2-dehydro-3-deoxy-D-arabino-heptonate + phosphate. The protein operates within metabolic intermediate biosynthesis; chorismate biosynthesis; chorismate from D-erythrose 4-phosphate and phosphoenolpyruvate: step 1/7. Feedback inhibited by tryptophan, tyrosine, phenylalanine and chorismate. Its function is as follows. Catalyzes an aldol-like condensation reaction between phosphoenolpyruvate (PEP) and D-erythrose 4-phosphate (E4P) to generate 3-deoxy-D-arabino-heptulosonate 7-phosphate (DAH7P) and inorganic phosphate. The chain is Phospho-2-dehydro-3-deoxyheptonate aldolase AroG (aroG) from Mycobacterium tuberculosis (strain ATCC 25618 / H37Rv).